The primary structure comprises 189 residues: Adenylate kinase (189 aa).

Residue 10–15 (GAGKGT) participates in ATP binding. Positions 30–59 (STGDIFRANVSGGTELGKKAQAYMDRGDLV) are NMP. Residues Thr31, Arg36, 57 to 59 (DLV), 85 to 88 (GFPR), and Gln92 contribute to the AMP site. Residues 126-136 (ERARIDNRSDD) form an LID region. Residue Arg127 coordinates ATP. Residues Arg133 and Arg144 each contribute to the AMP site. Position 172 (Gly172) interacts with ATP.

This sequence belongs to the adenylate kinase family. Monomer.

The protein localises to the cytoplasm. It catalyses the reaction AMP + ATP = 2 ADP. It participates in purine metabolism; AMP biosynthesis via salvage pathway; AMP from ADP: step 1/1. Catalyzes the reversible transfer of the terminal phosphate group between ATP and AMP. Plays an important role in cellular energy homeostasis and in adenine nucleotide metabolism. The polypeptide is Adenylate kinase (Thermobifida fusca (strain YX)).